We begin with the raw amino-acid sequence, 163 residues long: Phosphopantetheine adenylyltransferase (163 aa).

Position 9 (Ser-9) interacts with substrate. ATP contacts are provided by residues Ser-9–Phe-10 and His-17. 3 residues coordinate substrate: Lys-41, Thr-73, and Arg-87. ATP contacts are provided by residues Gly-88–Arg-90, Glu-98, and Tyr-123–Ser-129.

This sequence belongs to the bacterial CoaD family. As to quaternary structure, homohexamer. It depends on Mg(2+) as a cofactor.

It is found in the cytoplasm. The enzyme catalyses (R)-4'-phosphopantetheine + ATP + H(+) = 3'-dephospho-CoA + diphosphate. Its pathway is cofactor biosynthesis; coenzyme A biosynthesis; CoA from (R)-pantothenate: step 4/5. In terms of biological role, reversibly transfers an adenylyl group from ATP to 4'-phosphopantetheine, yielding dephospho-CoA (dPCoA) and pyrophosphate. The sequence is that of Phosphopantetheine adenylyltransferase from Lachnoclostridium phytofermentans (strain ATCC 700394 / DSM 18823 / ISDg) (Clostridium phytofermentans).